The sequence spans 84 residues: Large ribosomal subunit protein bL27 (84 aa).

The segment at 1–21 is disordered; that stretch reads MAHKKGASSTRNGRDSNAQRL. Residues 7 to 19 are compositionally biased toward polar residues; that stretch reads ASSTRNGRDSNAQ.

The protein belongs to the bacterial ribosomal protein bL27 family.

The chain is Large ribosomal subunit protein bL27 from Clavibacter sepedonicus (Clavibacter michiganensis subsp. sepedonicus).